Here is a 172-residue protein sequence, read N- to C-terminus: Small ribosomal subunit protein uS5 (172 aa).

The S5 DRBM domain maps to 17–80; sequence LREKMISVNR…EQARRNMFKV (64 aa).

This sequence belongs to the universal ribosomal protein uS5 family. As to quaternary structure, part of the 30S ribosomal subunit. Contacts proteins S4 and S8.

Functionally, with S4 and S12 plays an important role in translational accuracy. In terms of biological role, located at the back of the 30S subunit body where it stabilizes the conformation of the head with respect to the body. The chain is Small ribosomal subunit protein uS5 from Burkholderia pseudomallei (strain 1106a).